A 247-amino-acid chain; its full sequence is MSGHSKFANIAHKKAANDAAKGKIFTRLGKELMIAVKEGGPDVNNNSKLRQVVAKCKAANMPNDTIDRAIKKAASNDMSNYESVTYEGYGPNGTAIIVEALTDNRNRAASNIRSAFTKGGGNVGTPGCVSFMFDNKGQMIVDKEEYTGDADELMMLALDAGADDFNEEEDCYEILTSPEEFDAVNQALADAGVTFASAEVTMIPQTTVDLTSEDDIKKMNRILGLLDEDDDVQNVYHNWNEPEEDEE.

Belongs to the TACO1 family.

Its subcellular location is the cytoplasm. This is Probable transcriptional regulatory protein EUBELI_00902 from Lachnospira eligens (strain ATCC 27750 / DSM 3376 / VPI C15-48 / C15-B4) (Eubacterium eligens).